Reading from the N-terminus, the 140-residue chain is Putative pre-16S rRNA nuclease (140 aa).

This sequence belongs to the YqgF nuclease family.

Its subcellular location is the cytoplasm. Its function is as follows. Could be a nuclease involved in processing of the 5'-end of pre-16S rRNA. This Vibrio vulnificus (strain YJ016) protein is Putative pre-16S rRNA nuclease.